The chain runs to 154 residues: Myoglobin (154 aa).

Residues 2–148 form the Globin domain; the sequence is GLSDGEWQLV…FRNDIAAKYK (147 aa). Ser4 carries the post-translational modification Phosphoserine. Residue His65 coordinates nitrite. His65 contacts O2. Thr68 is subject to Phosphothreonine. His94 lines the heme b pocket.

Belongs to the globin family. As to quaternary structure, monomeric.

The protein resides in the cytoplasm. The protein localises to the sarcoplasm. The enzyme catalyses Fe(III)-heme b-[protein] + nitric oxide + H2O = Fe(II)-heme b-[protein] + nitrite + 2 H(+). The catalysed reaction is H2O2 + AH2 = A + 2 H2O. Its function is as follows. Monomeric heme protein which primary function is to store oxygen and facilitate its diffusion within muscle tissues. Reversibly binds oxygen through a pentacoordinated heme iron and enables its timely and efficient release as needed during periods of heightened demand. Depending on the oxidative conditions of tissues and cells, and in addition to its ability to bind oxygen, it also has a nitrite reductase activity whereby it regulates the production of bioactive nitric oxide. Under stress conditions, like hypoxia and anoxia, it also protects cells against reactive oxygen species thanks to its pseudoperoxidase activity. In Erinaceus europaeus (Western European hedgehog), this protein is Myoglobin (MB).